The primary structure comprises 90 residues: DNA-binding protein HU-alpha (90 aa).

The protein belongs to the bacterial histone-like protein family. In terms of assembly, heterodimer of an alpha and a beta chain.

Histone-like DNA-binding protein which is capable of wrapping DNA to stabilize it, and thus to prevent its denaturation under extreme environmental conditions. The polypeptide is DNA-binding protein HU-alpha (hupA) (Serratia marcescens).